Here is a 107-residue protein sequence, read N- to C-terminus: uncharacterized protein (107 aa).

2 disordered regions span residues 51–75 (VQRS…TQSA) and 88–107 (NPTP…APEP). The span at 63-75 (NGNQGSAIPTQSA) shows a compositional bias: polar residues.

This is an uncharacterized protein from Fowl adenovirus A serotype 1 (strain CELO / Phelps) (FAdV-1).